Here is a 244-residue protein sequence, read N- to C-terminus: Cobalt transport protein CbiM (244 aa).

Residues 1 to 27 (MVEGMLKTNFRLLFLLIFLLIPTPVLA) form the signal peptide. The next 6 membrane-spanning stretches (helical) occupy residues 36 to 56 (PVKWVIFWDLVTLPFIMVGFI), 65 to 85 (GPGAKLMLAFAGAFIFVLSAL), 102 to 122 (LAAILFGPFITTVLGFIVLIF), 134 to 154 (TLGANTFSMAVAGPLVAYGVY), 168 to 188 (IFLAAMLGDLVTYIVTSVQLA), and 196 to 216 (LFLSALKFMGIFALTQIPLAI).

This sequence belongs to the CbiM family. In terms of assembly, forms an energy-coupling factor (ECF) transporter complex composed of an ATP-binding protein (A component, CbiO), a transmembrane protein (T component, CbiQ) and 2 possible substrate-capture proteins (S components, CbiM and CbiN) of unknown stoichimetry.

It is found in the cell membrane. The protein operates within cofactor biosynthesis; adenosylcobalamin biosynthesis. Functionally, part of the energy-coupling factor (ECF) transporter complex CbiMNOQ involved in cobalt import. In Carboxydothermus hydrogenoformans (strain ATCC BAA-161 / DSM 6008 / Z-2901), this protein is Cobalt transport protein CbiM.